We begin with the raw amino-acid sequence, 544 residues long: Chaperonin GroEL (544 aa).

Residues 29-32, 86-90, glycine 413, 476-478, and aspartate 492 contribute to the ATP site; these read TLGP, DGTTT, and NAA.

This sequence belongs to the chaperonin (HSP60) family. Forms a cylinder of 14 subunits composed of two heptameric rings stacked back-to-back. Interacts with the co-chaperonin GroES.

It is found in the cytoplasm. It catalyses the reaction ATP + H2O + a folded polypeptide = ADP + phosphate + an unfolded polypeptide.. In terms of biological role, together with its co-chaperonin GroES, plays an essential role in assisting protein folding. The GroEL-GroES system forms a nano-cage that allows encapsulation of the non-native substrate proteins and provides a physical environment optimized to promote and accelerate protein folding. The polypeptide is Chaperonin GroEL (Bacillus cereus).